A 519-amino-acid polypeptide reads, in one-letter code: Flavin-dependent halogenase rdc2 (519 aa).

Residues 1–21 (MSVPKSCTILVAGGGPAGSYA) form the signal peptide. 3 residues coordinate FAD: G14, A17, and E47. Residues S324 and G325 each coordinate chloride.

It belongs to the flavin-dependent halogenase family.

It participates in secondary metabolite biosynthesis. Functionally, flavin-dependent halogenase; part of the gene cluster that mediates the biosynthesis of radicicol, a resorcylic acid lactone (RAL) that irreversibly inhibits the HSP90 molecular chaperone, an important target for cancer chemotherapy. Within the cluster, rdc2 is involved in the chlorination of the resorcylic acid lactone (RAL) structure to convert monocillin I into radicicol. Also chlorinates monocillin II to produce 6-cholomonocillin II and monocilllin IV to produce 13-chloromonocillin IV. In contrast to most fungal halogenases, rdc2 has a broad substrate specificity and can accept a variety of macrolactones as the substrates to generate chlorinated derivatives, including dihydroresorcylide, zearalenone, curvularin, or even curcumin. Rdc2 is able to dichlorinate dihydroresorcylide and monocillin IV. Dihydroresorcylide is first chlorinated at position 11 to produce 11-chlorodihydroresorcylide which can be further chlorinated by rdc2 at possition 13. Mororeover, rdc2 can incorporate bromine into dihydroresorcylide to yield the corresponding mono- and di-brominated derivatives. Finally, rdc2 is also able to halogenate the isoquinolines 4-hydroxyisoquinoline and 6-hydroxyisoquinoline into 3-chloro-4-hydroxyisoquinoline and 5-chloro-6-hydroxyisoquinoline, respectively. The radicicol cluster encodes only two apparent post-PKS enzymes, a cytochrome P450 monooxygenase (rdc4) and a non-heme halogenase (rdc2) that could introduce the epoxide and the chlorine, respectively. If this cluster includes all the genes required for radicicol biosynthesis, the remaining structural features of radicicol are presumably generated by the PKSs rdc1 and rdc5. The C-2' ketone could arise if the R-PKS rdc5 and NR-PKS rdc1 each carry out four iterations, in contrast to the five iteration-three iteration split for the hypothemycin PKSs. The origin of the cis 5',6' double bond is not known. The radicicol R-PKS rdc5 ER domain may catalyze either double bond isomerization or reduction in the third iteration. The protein is Flavin-dependent halogenase rdc2 of Metacordyceps chlamydosporia (Nematophagous fungus).